The following is a 77-amino-acid chain: UPF0401 protein c3666 (77 aa).

It belongs to the UPF0401 family.

The protein is UPF0401 protein c3666 of Escherichia coli O6:H1 (strain CFT073 / ATCC 700928 / UPEC).